The following is a 455-amino-acid chain: Bifunctional protein GlmU (455 aa).

The segment at 1–228 (MTQPLHVIIL…AQEAEGANDP (228 aa)) is pyrophosphorylase. Residues 10–13 (LAAG), Lys-24, Gln-76, 81–82 (GT), 103–105 (YGD), Gly-138, Glu-153, Asn-168, and Asn-226 each bind UDP-N-acetyl-alpha-D-glucosamine. Asp-105 serves as a coordination point for Mg(2+). Asn-226 provides a ligand contact to Mg(2+). A linker region spans residues 229–249 (WQLSQLERAWQRRAVRALCAQ). An N-acetyltransferase region spans residues 250-455 (GARVRDPARL…DGWKRPLKKS (206 aa)). Positions 332 and 350 each coordinate UDP-N-acetyl-alpha-D-glucosamine. The active-site Proton acceptor is His-362. UDP-N-acetyl-alpha-D-glucosamine contacts are provided by Tyr-365 and Asn-376. Acetyl-CoA is bound by residues Ala-379, 385 to 386 (NY), Ser-404, Ala-422, and Arg-439.

The protein in the N-terminal section; belongs to the N-acetylglucosamine-1-phosphate uridyltransferase family. This sequence in the C-terminal section; belongs to the transferase hexapeptide repeat family. Homotrimer. The cofactor is Mg(2+).

The protein resides in the cytoplasm. The enzyme catalyses alpha-D-glucosamine 1-phosphate + acetyl-CoA = N-acetyl-alpha-D-glucosamine 1-phosphate + CoA + H(+). It carries out the reaction N-acetyl-alpha-D-glucosamine 1-phosphate + UTP + H(+) = UDP-N-acetyl-alpha-D-glucosamine + diphosphate. It participates in nucleotide-sugar biosynthesis; UDP-N-acetyl-alpha-D-glucosamine biosynthesis; N-acetyl-alpha-D-glucosamine 1-phosphate from alpha-D-glucosamine 6-phosphate (route II): step 2/2. Its pathway is nucleotide-sugar biosynthesis; UDP-N-acetyl-alpha-D-glucosamine biosynthesis; UDP-N-acetyl-alpha-D-glucosamine from N-acetyl-alpha-D-glucosamine 1-phosphate: step 1/1. It functions in the pathway bacterial outer membrane biogenesis; LPS lipid A biosynthesis. Catalyzes the last two sequential reactions in the de novo biosynthetic pathway for UDP-N-acetylglucosamine (UDP-GlcNAc). The C-terminal domain catalyzes the transfer of acetyl group from acetyl coenzyme A to glucosamine-1-phosphate (GlcN-1-P) to produce N-acetylglucosamine-1-phosphate (GlcNAc-1-P), which is converted into UDP-GlcNAc by the transfer of uridine 5-monophosphate (from uridine 5-triphosphate), a reaction catalyzed by the N-terminal domain. This chain is Bifunctional protein GlmU, found in Stenotrophomonas maltophilia (strain R551-3).